Here is a 338-residue protein sequence, read N- to C-terminus: Biotin synthase (338 aa).

Residues 46 to 270 (NEVQLSTLLS…VAVARITMPA (225 aa)) enclose the Radical SAM core domain. Positions 61, 65, and 68 each coordinate [4Fe-4S] cluster. Residues Cys-105, Cys-136, Cys-196, and Arg-274 each contribute to the [2Fe-2S] cluster site.

The protein belongs to the radical SAM superfamily. Biotin synthase family. Homodimer. It depends on [4Fe-4S] cluster as a cofactor. The cofactor is [2Fe-2S] cluster.

The enzyme catalyses (4R,5S)-dethiobiotin + (sulfur carrier)-SH + 2 reduced [2Fe-2S]-[ferredoxin] + 2 S-adenosyl-L-methionine = (sulfur carrier)-H + biotin + 2 5'-deoxyadenosine + 2 L-methionine + 2 oxidized [2Fe-2S]-[ferredoxin]. Its pathway is cofactor biosynthesis; biotin biosynthesis; biotin from 7,8-diaminononanoate: step 2/2. In terms of biological role, catalyzes the conversion of dethiobiotin (DTB) to biotin by the insertion of a sulfur atom into dethiobiotin via a radical-based mechanism. This is Biotin synthase from Rhizorhabdus wittichii (strain DSM 6014 / CCUG 31198 / JCM 15750 / NBRC 105917 / EY 4224 / RW1) (Sphingomonas wittichii).